Reading from the N-terminus, the 885-residue chain is Rho GTPase-activating protein gacFF (885 aa).

Low complexity predominate over residues 168–182; sequence TTTNNSNNSNSNNNN. The interval 168-187 is disordered; the sequence is TTTNNSNNSNSNNNNKQYNS. Positions 222–249 form a coiled coil; that stretch reads LINKIQNDSEQLKLVLSQVEQQIEFLKS. Residues 348–394 enclose the F-box domain; that stretch reads SDIFSLLPTHLTLYVFSYLEPKELLILAQVSSQWQKLAGDNLLWVRF. The PH domain maps to 464–571; the sequence is SSSKEGWLYK…WMILLNSIIK (108 aa). Low complexity-rich tracts occupy residues 594 to 622 and 629 to 648; these read NNVY…NNNN and LPPL…SSTG. The interval 594-680 is disordered; that stretch reads NNVYINNNNN…GGGSGGNNNF (87 aa). In terms of domain architecture, Rho-GAP spans 701–885; the sequence is VALSKILENQ…KYYDEIFIKK (185 aa).

The protein localises to the cytoplasm. In terms of biological role, rho GTPase-activating protein involved in the signal transduction pathway. This Dictyostelium discoideum (Social amoeba) protein is Rho GTPase-activating protein gacFF (gacFF).